Consider the following 631-residue polypeptide: Phosphomethylpyrimidine synthase (631 aa).

Residues Asn239, Met268, Tyr297, His333, 353–355 (SRG), 394–397 (DGLR), and Glu433 contribute to the substrate site. His437 serves as a coordination point for Zn(2+). Substrate is bound at residue Tyr460. His501 serves as a coordination point for Zn(2+). Residues Cys581, Cys584, and Cys589 each contribute to the [4Fe-4S] cluster site.

It belongs to the ThiC family. As to quaternary structure, homodimer. The cofactor is [4Fe-4S] cluster.

The catalysed reaction is 5-amino-1-(5-phospho-beta-D-ribosyl)imidazole + S-adenosyl-L-methionine = 4-amino-2-methyl-5-(phosphooxymethyl)pyrimidine + CO + 5'-deoxyadenosine + formate + L-methionine + 3 H(+). It functions in the pathway cofactor biosynthesis; thiamine diphosphate biosynthesis. Its function is as follows. Catalyzes the synthesis of the hydroxymethylpyrimidine phosphate (HMP-P) moiety of thiamine from aminoimidazole ribotide (AIR) in a radical S-adenosyl-L-methionine (SAM)-dependent reaction. The protein is Phosphomethylpyrimidine synthase of Salmonella enteritidis PT4 (strain P125109).